The following is a 605-amino-acid chain: Capsid scaffolding protein (605 aa).

Active-site charge relay system residues include histidine 52, serine 120, and histidine 139. The segment at glycine 326–threonine 344 is interaction with pAP. Residues isoleucine 585 to cysteine 605 form an interaction with major capsid protein region.

Belongs to the herpesviridae capsid scaffolding protein family. As to quaternary structure, homomultimer. Interacts with major capsid protein. Exists in a monomer-dimer equilibrium with the dimer being the active species. In terms of processing, capsid scaffolding protein is cleaved by assemblin after formation of the spherical procapsid. As a result, the capsid obtains its mature, icosahedral shape. Cleavages occur at two or more sites: release (R-site) and maturation (M-site).

The protein localises to the host cytoplasm. The protein resides in the host nucleus. It carries out the reaction Cleaves -Ala-|-Ser- and -Ala-|-Ala- bonds in the scaffold protein.. Its function is as follows. Acts as a scaffold protein by binding major capsid protein in the cytoplasm, inducing the nuclear localization of both proteins. Multimerizes in the nucleus such as major capsid protein forms the icosahedral T=16 capsid. Autocatalytic cleavage releases the assembly protein, and subsequently abolishes interaction with major capsid protein. Cleavages products are evicted from the capsid before or during DNA packaging. Protease that plays an essential role in virion assembly within the nucleus. Catalyzes the cleavage of the assembly protein after formation of the spherical procapsid. By that cleavage, the capsid matures and gains its icosahedral shape. The cleavage sites seem to include -Ala-Ser-, -Ala-Ala-, as well as Ala-Thr bonds. Assemblin and cleavages products are evicted from the capsid before or during DNA packaging. Functionally, plays a major role in capsid assembly. Acts as a scaffold protein by binding major capsid protein. Multimerizes in the nucleus such as major capsid protein forms the icosahedral T=16 capsid. Cleaved by assemblin after capsid completion. The cleavages products are evicted from the capsid before or during DNA packaging. This is Capsid scaffolding protein (33) from Varicella-zoster virus (strain Dumas) (HHV-3).